A 273-amino-acid polypeptide reads, in one-letter code: Putative phosphoenolpyruvate synthase regulatory protein (273 aa).

153–160 (AVSRAGKT) contributes to the ADP binding site.

This sequence belongs to the pyruvate, phosphate/water dikinase regulatory protein family. PSRP subfamily.

The enzyme catalyses [pyruvate, water dikinase] + ADP = [pyruvate, water dikinase]-phosphate + AMP + H(+). It catalyses the reaction [pyruvate, water dikinase]-phosphate + phosphate + H(+) = [pyruvate, water dikinase] + diphosphate. Bifunctional serine/threonine kinase and phosphorylase involved in the regulation of the phosphoenolpyruvate synthase (PEPS) by catalyzing its phosphorylation/dephosphorylation. This is Putative phosphoenolpyruvate synthase regulatory protein from Xanthomonas campestris pv. campestris (strain 8004).